The following is a 227-amino-acid chain: Cytidylate kinase (227 aa).

12 to 20 (GPSGAGKGT) is an ATP binding site.

The protein belongs to the cytidylate kinase family. Type 1 subfamily.

It is found in the cytoplasm. It carries out the reaction CMP + ATP = CDP + ADP. The enzyme catalyses dCMP + ATP = dCDP + ADP. The protein is Cytidylate kinase of Salmonella paratyphi B (strain ATCC BAA-1250 / SPB7).